The following is a 347-amino-acid chain: Holliday junction branch migration complex subunit RuvB (347 aa).

Positions 1–186 are large ATPase domain (RuvB-L); that stretch reads MKDENSISFL…FGITARFELY (186 aa). ATP is bound by residues Leu25, Arg26, Gly67, Lys70, Thr71, Thr72, 133–135, Arg176, Tyr186, and Arg223; that span reads EDY. Thr71 is a Mg(2+) binding site. The interval 187–257 is small ATPAse domain (RuvB-S); the sequence is SEIELVEIIK…IVSIGLEMLR (71 aa). The segment at 260–347 is head domain (RuvB-H); that stretch reads GEGLDEQDRN…GLNENQRVSF (88 aa). DNA contacts are provided by Arg315 and Arg320.

It belongs to the RuvB family. Homohexamer. Forms an RuvA(8)-RuvB(12)-Holliday junction (HJ) complex. HJ DNA is sandwiched between 2 RuvA tetramers; dsDNA enters through RuvA and exits via RuvB. An RuvB hexamer assembles on each DNA strand where it exits the tetramer. Each RuvB hexamer is contacted by two RuvA subunits (via domain III) on 2 adjacent RuvB subunits; this complex drives branch migration. In the full resolvosome a probable DNA-RuvA(4)-RuvB(12)-RuvC(2) complex forms which resolves the HJ.

It localises to the cytoplasm. The enzyme catalyses ATP + H2O = ADP + phosphate + H(+). In terms of biological role, the RuvA-RuvB-RuvC complex processes Holliday junction (HJ) DNA during genetic recombination and DNA repair, while the RuvA-RuvB complex plays an important role in the rescue of blocked DNA replication forks via replication fork reversal (RFR). RuvA specifically binds to HJ cruciform DNA, conferring on it an open structure. The RuvB hexamer acts as an ATP-dependent pump, pulling dsDNA into and through the RuvAB complex. RuvB forms 2 homohexamers on either side of HJ DNA bound by 1 or 2 RuvA tetramers; 4 subunits per hexamer contact DNA at a time. Coordinated motions by a converter formed by DNA-disengaged RuvB subunits stimulates ATP hydrolysis and nucleotide exchange. Immobilization of the converter enables RuvB to convert the ATP-contained energy into a lever motion, pulling 2 nucleotides of DNA out of the RuvA tetramer per ATP hydrolyzed, thus driving DNA branch migration. The RuvB motors rotate together with the DNA substrate, which together with the progressing nucleotide cycle form the mechanistic basis for DNA recombination by continuous HJ branch migration. Branch migration allows RuvC to scan DNA until it finds its consensus sequence, where it cleaves and resolves cruciform DNA. In Borreliella burgdorferi (strain ATCC 35210 / DSM 4680 / CIP 102532 / B31) (Borrelia burgdorferi), this protein is Holliday junction branch migration complex subunit RuvB.